Consider the following 558-residue polypeptide: Armadillo repeat-containing X-linked protein 5 (558 aa).

Basic and acidic residues-rich tracts occupy residues 1–14 (MVDS…RGKA) and 139–156 (KSHD…REET). Disordered regions lie at residues 1–35 (MVDS…GKTQ) and 139–165 (KSHD…SSDE). An ARM 1 repeat occupies 300 to 339 (CKSRGFSLEPKEFDKLVALLKLTKDPFIHEIATMIMGISP). The tract at residues 369–388 (HPGALSMVDDSSESSEEPKS) is disordered. ARM repeat units follow at residues 422-461 (IKFE…CLSK), 463-503 (HANT…NINF), and 520-558 (SELI…ILKL).

It belongs to the eutherian X-chromosome-specific Armcx family.

The protein is Armadillo repeat-containing X-linked protein 5 (ARMCX5) of Homo sapiens (Human).